Reading from the N-terminus, the 64-residue chain is Beta-defensin 1 (64 aa).

A signal peptide spans 1 to 20 (MRLHHLLLVLFFLVLSAGSG). The propeptide occupies 21 to 26 (FTQGIR). Cystine bridges form between cysteine 31-cysteine 60, cysteine 38-cysteine 53, and cysteine 43-cysteine 61.

This sequence belongs to the beta-defensin family. As to quaternary structure, monomer. Homodimer.

It is found in the secreted. The protein localises to the membrane. Its function is as follows. Has bactericidal activity. May act as a ligand for C-C chemokine receptor CCR6. Positively regulates the sperm motility and bactericidal activity in a CCR6-dependent manner. Binds to CCR6 and triggers Ca2+ mobilization in the sperm which is important for its motility. This Capra hircus (Goat) protein is Beta-defensin 1 (DEFB1).